Here is a 156-residue protein sequence, read N- to C-terminus: Ribosome maturation factor RimP (156 aa).

Belongs to the RimP family.

It is found in the cytoplasm. Its function is as follows. Required for maturation of 30S ribosomal subunits. The protein is Ribosome maturation factor RimP of Exiguobacterium sp. (strain ATCC BAA-1283 / AT1b).